Consider the following 438-residue polypeptide: 23S rRNA (uracil(1939)-C(5))-methyltransferase RlmD (438 aa).

In terms of domain architecture, TRAM spans 10-68; sequence RVTTRQTITVKVHDLDSFGQGVAHHNGKALFVQGALPDEVAEVSIIEDKRHFSRGVATR. Residues Cys81, Cys87, Cys90, and Cys168 each coordinate [4Fe-4S] cluster. S-adenosyl-L-methionine contacts are provided by Gln271, Phe300, Asn305, Glu321, Asn348, and Asp369. Residue Cys395 is the Nucleophile of the active site.

Belongs to the class I-like SAM-binding methyltransferase superfamily. RNA M5U methyltransferase family. RlmD subfamily.

The enzyme catalyses uridine(1939) in 23S rRNA + S-adenosyl-L-methionine = 5-methyluridine(1939) in 23S rRNA + S-adenosyl-L-homocysteine + H(+). Its function is as follows. Catalyzes the formation of 5-methyl-uridine at position 1939 (m5U1939) in 23S rRNA. This is 23S rRNA (uracil(1939)-C(5))-methyltransferase RlmD from Erwinia tasmaniensis (strain DSM 17950 / CFBP 7177 / CIP 109463 / NCPPB 4357 / Et1/99).